The following is a 250-amino-acid chain: Pimeloyl-[acyl-carrier protein] methyl ester esterase (250 aa).

Residues Trp12, 71-72 (SL), and 138-142 (FVALQ) each bind substrate. Ser71 functions as the Nucleophile in the catalytic mechanism. Residues Asp202 and His230 contribute to the active site. His230 provides a ligand contact to substrate.

The protein belongs to the AB hydrolase superfamily. Carboxylesterase BioH family. As to quaternary structure, monomer.

The protein resides in the cytoplasm. The catalysed reaction is 6-carboxyhexanoyl-[ACP] methyl ester + H2O = 6-carboxyhexanoyl-[ACP] + methanol + H(+). Its pathway is cofactor biosynthesis; biotin biosynthesis. In terms of biological role, the physiological role of BioH is to remove the methyl group introduced by BioC when the pimeloyl moiety is complete. It allows to synthesize pimeloyl-ACP via the fatty acid synthetic pathway through the hydrolysis of the ester bonds of pimeloyl-ACP esters. The polypeptide is Pimeloyl-[acyl-carrier protein] methyl ester esterase (Aromatoleum aromaticum (strain DSM 19018 / LMG 30748 / EbN1) (Azoarcus sp. (strain EbN1))).